Here is a 138-residue protein sequence, read N- to C-terminus: uncharacterized protein (138 aa).

This is an uncharacterized protein from Escherichia coli (strain K12).